Here is a 67-residue protein sequence, read N- to C-terminus: DNA-directed RNA polymerases I, II, and III subunit RPABC5 (67 aa).

Zn(2+)-binding residues include C7, C10, C44, and C45.

This sequence belongs to the archaeal Rpo10/eukaryotic RPB10 RNA polymerase subunit family. In terms of assembly, component of the RNA polymerase I (Pol I), RNA polymerase II (Pol II) and RNA polymerase III (Pol III) complexes consisting of at least 13, 12 and 17 subunits, respectively.

The protein localises to the nucleus. DNA-dependent RNA polymerase catalyzes the transcription of DNA into RNA using the four ribonucleoside triphosphates as substrates. Common component of RNA polymerases I, II and III which synthesize ribosomal RNA precursors, mRNA precursors and many functional non-coding RNAs, and a small RNAs, such as 5S rRNA and tRNAs, respectively. Pol II is the central component of the basal RNA polymerase II transcription machinery. Pols are composed of mobile elements that move relative to each other. In Pol II, RBP10 is part of the core element with the central large cleft. The polypeptide is DNA-directed RNA polymerases I, II, and III subunit RPABC5 (Caenorhabditis briggsae).